The following is a 216-amino-acid chain: Protein-L-isoaspartate O-methyltransferase (216 aa).

Ser61 is a catalytic residue.

It belongs to the methyltransferase superfamily. L-isoaspartyl/D-aspartyl protein methyltransferase family.

It localises to the cytoplasm. The enzyme catalyses [protein]-L-isoaspartate + S-adenosyl-L-methionine = [protein]-L-isoaspartate alpha-methyl ester + S-adenosyl-L-homocysteine. Functionally, catalyzes the methyl esterification of L-isoaspartyl residues in peptides and proteins that result from spontaneous decomposition of normal L-aspartyl and L-asparaginyl residues. It plays a role in the repair and/or degradation of damaged proteins. The protein is Protein-L-isoaspartate O-methyltransferase of Geobacter metallireducens (strain ATCC 53774 / DSM 7210 / GS-15).